A 291-amino-acid chain; its full sequence is Ribonuclease Z (291 aa).

Zn(2+) contacts are provided by His61, His63, Asp65, His66, His133, Asp201, and His257. The active-site Proton acceptor is the Asp65.

This sequence belongs to the RNase Z family. As to quaternary structure, homodimer. Requires Zn(2+) as cofactor.

It carries out the reaction Endonucleolytic cleavage of RNA, removing extra 3' nucleotides from tRNA precursor, generating 3' termini of tRNAs. A 3'-hydroxy group is left at the tRNA terminus and a 5'-phosphoryl group is left at the trailer molecule.. Its function is as follows. Zinc phosphodiesterase, which displays some tRNA 3'-processing endonuclease activity. Probably involved in tRNA maturation, by removing a 3'-trailer from precursor tRNA. In Saccharolobus islandicus (strain L.S.2.15 / Lassen #1) (Sulfolobus islandicus), this protein is Ribonuclease Z.